The chain runs to 337 residues: Cytoskeleton protein RodZ (337 aa).

The Cytoplasmic portion of the chain corresponds to 1–111 (MNTEATHDQN…LGKRRKKRDG (111 aa)). Positions 19–71 (LRNAREQLGLSQQAVAERLCLKVSTVRDIEEDKAPADLASTFLRGYIRSYARL) constitute an HTH cro/C1-type domain. The H-T-H motif DNA-binding region spans 30–49 (QQAVAERLCLKVSTVRDIEE). The chain crosses the membrane as a helical; Signal-anchor for type II membrane protein span at residues 112–132 (WLMTFTWLVLFVVIGLSGAWW). Residues 133–337 (WQDHKAQQEE…TLNAEQSPAQ (205 aa)) lie on the Periplasmic side of the membrane. Over residues 145–167 (TMADQSSAELSSNSEQGQSVPLN) the composition is skewed to polar residues. Positions 145–236 (TMADQSSAEL…TAATTPDGAA (92 aa)) are disordered. The segment covering 168 to 207 (TSTTTDPATTSTPPASVDTTATNTQTPVVTAPAPAVDPQQ) has biased composition (low complexity). The segment covering 208–218 (NAVVSPSQANV) has biased composition (polar residues). The span at 219 to 236 (DTAATPAPTAATTPDGAA) shows a compositional bias: low complexity.

Belongs to the RodZ family.

The protein localises to the cell inner membrane. Functionally, cytoskeletal protein that is involved in cell-shape control through regulation of the length of the long axis. The chain is Cytoskeleton protein RodZ from Escherichia coli O157:H7.